Reading from the N-terminus, the 363-residue chain is Uroporphyrinogen decarboxylase (363 aa).

Residues 27–31 (RQAGR), D77, Y157, T212, and H333 each bind substrate.

This sequence belongs to the uroporphyrinogen decarboxylase family. Homodimer.

It is found in the cytoplasm. The enzyme catalyses uroporphyrinogen III + 4 H(+) = coproporphyrinogen III + 4 CO2. It functions in the pathway porphyrin-containing compound metabolism; protoporphyrin-IX biosynthesis; coproporphyrinogen-III from 5-aminolevulinate: step 4/4. Its function is as follows. Catalyzes the decarboxylation of four acetate groups of uroporphyrinogen-III to yield coproporphyrinogen-III. This is Uroporphyrinogen decarboxylase from Cupriavidus pinatubonensis (strain JMP 134 / LMG 1197) (Cupriavidus necator (strain JMP 134)).